Consider the following 399-residue polypeptide: Acetate kinase (399 aa).

Asn-10 provides a ligand contact to Mg(2+). Lys-17 is an ATP binding site. Arg-91 serves as a coordination point for substrate. Residue Asp-148 is the Proton donor/acceptor of the active site. Residues 208–212 (HLGNG), 283–285 (DCR), and 331–335 (GIGEN) contribute to the ATP site. Glu-385 serves as a coordination point for Mg(2+).

The protein belongs to the acetokinase family. Homodimer. It depends on Mg(2+) as a cofactor. The cofactor is Mn(2+).

It is found in the cytoplasm. It catalyses the reaction acetate + ATP = acetyl phosphate + ADP. Its pathway is metabolic intermediate biosynthesis; acetyl-CoA biosynthesis; acetyl-CoA from acetate: step 1/2. Catalyzes the formation of acetyl phosphate from acetate and ATP. Can also catalyze the reverse reaction. The protein is Acetate kinase of Shewanella sp. (strain ANA-3).